Consider the following 287-residue polypeptide: Acetylglutamate kinase (287 aa).

Residues 70–71 (GG), arginine 92, and asparagine 184 each bind substrate.

This sequence belongs to the acetylglutamate kinase family. ArgB subfamily.

Its subcellular location is the cytoplasm. The enzyme catalyses N-acetyl-L-glutamate + ATP = N-acetyl-L-glutamyl 5-phosphate + ADP. It participates in amino-acid biosynthesis; L-arginine biosynthesis; N(2)-acetyl-L-ornithine from L-glutamate: step 2/4. Its function is as follows. Catalyzes the ATP-dependent phosphorylation of N-acetyl-L-glutamate. In Ruegeria pomeroyi (strain ATCC 700808 / DSM 15171 / DSS-3) (Silicibacter pomeroyi), this protein is Acetylglutamate kinase.